Here is a 106-residue protein sequence, read N- to C-terminus: U1-lycotoxin-Ls1z (106 aa).

A signal peptide spans 1-19 (MKVLVVVALLVTLISYSSS). Residues 20–40 (EGIDDLEADELLSLMANEQTR) constitute a propeptide that is removed on maturation. Cystine bridges form between C43/C58, C50/C67, C57/C85, and C69/C83.

This sequence belongs to the neurotoxin 19 (CSTX) family. 03 subfamily. In terms of tissue distribution, expressed by the venom gland.

The protein resides in the secreted. The chain is U1-lycotoxin-Ls1z from Lycosa singoriensis (Wolf spider).